The primary structure comprises 257 residues: Acetylglutamate kinase (257 aa).

Residues 43 to 44 (GG), R65, and N157 contribute to the substrate site. ATP is bound by residues 180-185 (DVSGIL) and 208-210 (IIT).

Belongs to the acetylglutamate kinase family. ArgB subfamily. In terms of assembly, homodimer.

It is found in the cytoplasm. The catalysed reaction is N-acetyl-L-glutamate + ATP = N-acetyl-L-glutamyl 5-phosphate + ADP. The protein operates within amino-acid biosynthesis; L-arginine biosynthesis; N(2)-acetyl-L-ornithine from L-glutamate: step 2/4. In terms of biological role, catalyzes the ATP-dependent phosphorylation of N-acetyl-L-glutamate. In Pectobacterium carotovorum subsp. carotovorum (strain PC1), this protein is Acetylglutamate kinase.